A 443-amino-acid polypeptide reads, in one-letter code: ATP-dependent protease ATPase subunit HslU (443 aa).

ATP is bound by residues Ile18, 60 to 65 (GVGKTE), Asp256, Glu321, and Arg393.

This sequence belongs to the ClpX chaperone family. HslU subfamily. In terms of assembly, a double ring-shaped homohexamer of HslV is capped on each side by a ring-shaped HslU homohexamer. The assembly of the HslU/HslV complex is dependent on binding of ATP.

Its subcellular location is the cytoplasm. Its function is as follows. ATPase subunit of a proteasome-like degradation complex; this subunit has chaperone activity. The binding of ATP and its subsequent hydrolysis by HslU are essential for unfolding of protein substrates subsequently hydrolyzed by HslV. HslU recognizes the N-terminal part of its protein substrates and unfolds these before they are guided to HslV for hydrolysis. The chain is ATP-dependent protease ATPase subunit HslU from Yersinia pestis bv. Antiqua (strain Antiqua).